The chain runs to 308 residues: Methionyl-tRNA formyltransferase (308 aa).

109-112 (SLLP) provides a ligand contact to (6S)-5,6,7,8-tetrahydrofolate.

It belongs to the Fmt family.

It carries out the reaction L-methionyl-tRNA(fMet) + (6R)-10-formyltetrahydrofolate = N-formyl-L-methionyl-tRNA(fMet) + (6S)-5,6,7,8-tetrahydrofolate + H(+). Functionally, attaches a formyl group to the free amino group of methionyl-tRNA(fMet). The formyl group appears to play a dual role in the initiator identity of N-formylmethionyl-tRNA by promoting its recognition by IF2 and preventing the misappropriation of this tRNA by the elongation apparatus. The polypeptide is Methionyl-tRNA formyltransferase (Salinispora tropica (strain ATCC BAA-916 / DSM 44818 / JCM 13857 / NBRC 105044 / CNB-440)).